The sequence spans 197 residues: ATP-dependent Clp protease proteolytic subunit (197 aa).

The active-site Nucleophile is S101. Residue H126 is part of the active site.

It belongs to the peptidase S14 family. In terms of assembly, component of the chloroplastic Clp protease core complex.

It localises to the plastid. It is found in the chloroplast stroma. The catalysed reaction is Hydrolysis of proteins to small peptides in the presence of ATP and magnesium. alpha-casein is the usual test substrate. In the absence of ATP, only oligopeptides shorter than five residues are hydrolyzed (such as succinyl-Leu-Tyr-|-NHMec, and Leu-Tyr-Leu-|-Tyr-Trp, in which cleavage of the -Tyr-|-Leu- and -Tyr-|-Trp bonds also occurs).. Functionally, cleaves peptides in various proteins in a process that requires ATP hydrolysis. Has a chymotrypsin-like activity. Plays a major role in the degradation of misfolded proteins. This chain is ATP-dependent Clp protease proteolytic subunit, found in Daucus carota (Wild carrot).